We begin with the raw amino-acid sequence, 561 residues long: Dihydroxy-acid dehydratase (561 aa).

Residue C51 coordinates [2Fe-2S] cluster. D83 provides a ligand contact to Mg(2+). C124 contributes to the [2Fe-2S] cluster binding site. Mg(2+) is bound by residues D125 and K126. Residue K126 is modified to N6-carboxylysine. C196 is a [2Fe-2S] cluster binding site. Mg(2+) is bound at residue E447. S473 functions as the Proton acceptor in the catalytic mechanism.

It belongs to the IlvD/Edd family. In terms of assembly, homodimer. [2Fe-2S] cluster serves as cofactor. The cofactor is Mg(2+).

The catalysed reaction is (2R)-2,3-dihydroxy-3-methylbutanoate = 3-methyl-2-oxobutanoate + H2O. It carries out the reaction (2R,3R)-2,3-dihydroxy-3-methylpentanoate = (S)-3-methyl-2-oxopentanoate + H2O. The protein operates within amino-acid biosynthesis; L-isoleucine biosynthesis; L-isoleucine from 2-oxobutanoate: step 3/4. It participates in amino-acid biosynthesis; L-valine biosynthesis; L-valine from pyruvate: step 3/4. Functions in the biosynthesis of branched-chain amino acids. Catalyzes the dehydration of (2R,3R)-2,3-dihydroxy-3-methylpentanoate (2,3-dihydroxy-3-methylvalerate) into 2-oxo-3-methylpentanoate (2-oxo-3-methylvalerate) and of (2R)-2,3-dihydroxy-3-methylbutanoate (2,3-dihydroxyisovalerate) into 2-oxo-3-methylbutanoate (2-oxoisovalerate), the penultimate precursor to L-isoleucine and L-valine, respectively. This Oceanobacillus iheyensis (strain DSM 14371 / CIP 107618 / JCM 11309 / KCTC 3954 / HTE831) protein is Dihydroxy-acid dehydratase.